The primary structure comprises 542 residues: Putative ankyrin repeat protein FPV115 (542 aa).

ANK repeat units lie at residues 33-62 (FRNLPLHYAIYSRRKDIVETLLKSGYDPNS), 157-186 (DGLLPLYHAAAAGNTEMVELLLSYGAKTNL), 218-247 (NDINNILKTIQLYNADMLLFLIEIGLDINT), 251-281 (KGKTALHYACNSINCIETVKEIMKYGADINV), 285-314 (EGLTPLHSACKYGDLKLSKLLIEYGADVKV), 316-345 (TTSTVLNLAVESGNVELVKFLIEKNPEFIT), 347-375 (DYLSLSLAIRCKDINIVLLLLDAGMDVNS), and 378-407 (CISTPLHLGVILGNSNIVKLLLDHGANINA).

The polypeptide is Putative ankyrin repeat protein FPV115 (Fowlpox virus (strain NVSL) (FPV)).